A 510-amino-acid polypeptide reads, in one-letter code: RanBP-type and C3HC4-type zinc finger-containing protein 1 (510 aa).

Residue Met-1 is modified to N-acetylmethionine. Residues 1–220 are interaction with IRF3; sequence MDEKTKKAEE…PGCEMCCRAR (220 aa). The tract at residues 1-270 is interaction with TAB2; sequence MDEKTKKAEE…NYLQHVQLDQ (270 aa). At Ser-50 the chain carries Phosphoserine. A Ubiquitin-like domain is found at 55-119; it reads IRLWVSVEDA…DQETLHSHGV (65 aa). Residues 69-131 form an interaction with RNF31 region; the sequence is VTIWLTVRPD…NGDSAYLYLL (63 aa). The interval 160–192 is disordered; that stretch reads LTLQPRGPLEPGPPKPGVPQEPGRGQPDAVPEP. Over residues 167-178 the composition is skewed to pro residues; the sequence is PLEPGPPKPGVP. The segment at 193–222 adopts a RanBP2-type zinc-finger fold; it reads PPVGWQCPGCTFINKPTRPGCEMCCRARPE. Positions 233–261 form a coiled coil; that stretch reads DEEERARLAGEEEALRQYQQRKQQQQEGN. The tract at residues 278-506 is TRIAD supradomain; sequence EPAECPVCYS…VNGIPCHPSC (229 aa). The Zn(2+) site is built by Cys-282, Cys-285, Cys-300, His-302, Cys-305, Cys-308, and Cys-323. Residues 282 to 332 form an RING-type 1 zinc finger; the sequence is CPVCYSVLAPGEAVVLRECLHTFCRECLQGTIRNSQEAEVSCPFIDNTYSC. Tyr-330 bears the Phosphotyrosine mark. 11 residues coordinate Zn(2+): Cys-332, Cys-371, Cys-376, Cys-391, Cys-394, Cys-399, Cys-402, His-406, Cys-411, Cys-447, and Cys-450. The IBR-type zinc finger occupies 351 to 411; the sequence is QRFLDLGISI…CKAIHEQMNC (61 aa). The segment at 447-476 adopts an RING-type 2; atypical zinc-finger fold; sequence CPQCQIVVQKKDGCDWIRCTVCHTEICWVT. Cys-460 is an active-site residue. The Zn(2+) site is built by Cys-465 and Cys-468.

It belongs to the RBR family. Component of the LUBAC complex (linear ubiquitin chain assembly complex) which consists of SHARPIN, RBCK1 and RNF31. LUBAC has a MW of approximately 600 kDa suggesting a heteromultimeric assembly of its subunits. Interacts with beta-I-type (PRKCB1) and zeta-type protein kinase C (PRKCZ). Interacts with UBE2L3. Interacts with PRKCH. Associates with the TNF-R1 signaling complex (TNF-RSC) in a stimulation-dependent manner. Interacts with EYA1, TAB2, TAB3, MAP3K7 TRAF6 and RIPK1. Interacts with IRF3. In terms of assembly, interacts with IREB2 only in iron-rich conditions. As to quaternary structure, (Microbial infection) Interacts with hepatitis B virus/HBV protein HBx; this interaction is required to activate transcription of the viral genome. Auto-ubiquitinated. Auto-ubiquitination leads to degradation by the proteasome. Post-translationally, phosphorylated. In vitro, phosphorylation inhibits auto-ubiquitination activity. In terms of processing, (Microbial infection) Ubiquitinated by S.flexneri E3 ubiquitin-protein ligases IpaH1.4 and IpaH2.5, leading to its degradation by the proteasome, thereby preventing formation of the bacterial ubiquitin coat and activation of innate immunity.

It catalyses the reaction [E2 ubiquitin-conjugating enzyme]-S-ubiquitinyl-L-cysteine + [acceptor protein]-L-lysine = [E2 ubiquitin-conjugating enzyme]-L-cysteine + [acceptor protein]-N(6)-ubiquitinyl-L-lysine.. It participates in protein modification; protein ubiquitination. Functionally, E3 ubiquitin-protein ligase, which accepts ubiquitin from specific E2 ubiquitin-conjugating enzymes, such as UBE2L3/UBCM4, and then transfers it to substrates. Functions as an E3 ligase for oxidized IREB2 and both heme and oxygen are necessary for IREB2 ubiquitination. Promotes ubiquitination of TAB2 and IRF3 and their degradation by the proteasome. Component of the LUBAC complex which conjugates linear ('Met-1'-linked) polyubiquitin chains to substrates and plays a key role in NF-kappa-B activation and regulation of inflammation. LUBAC conjugates linear polyubiquitin to IKBKG and RIPK1 and is involved in activation of the canonical NF-kappa-B and the JNK signaling pathways. Linear ubiquitination mediated by the LUBAC complex interferes with TNF-induced cell death and thereby prevents inflammation. LUBAC is recruited to the TNF-R1 signaling complex (TNF-RSC) following polyubiquitination of TNF-RSC components by BIRC2 and/or BIRC3 and to conjugate linear polyubiquitin to IKBKG and possibly other components contributing to the stability of the complex. The LUBAC complex is also involved in innate immunity by conjugating linear polyubiquitin chains at the surface of bacteria invading the cytosol to form the ubiquitin coat surrounding bacteria. LUBAC is not able to initiate formation of the bacterial ubiquitin coat, and can only promote formation of linear polyubiquitins on pre-existing ubiquitin. The bacterial ubiquitin coat acts as an 'eat-me' signal for xenophagy and promotes NF-kappa-B activation. Together with OTULIN, the LUBAC complex regulates the canonical Wnt signaling during angiogenesis. Binds polyubiquitin of different linkage types. This chain is RanBP-type and C3HC4-type zinc finger-containing protein 1 (RBCK1), found in Homo sapiens (Human).